The following is a 728-amino-acid chain: FYN-binding protein 2 (728 aa).

Disordered stretches follow at residues 17 to 76, 250 to 287, and 367 to 390; these read QNLD…PLQP, QAPE…RPPI, and PGKN…EKQP. Polar residues predominate over residues 42 to 75; the sequence is GTQSTQILANGKPLSSNHKQRTPYCSSSESQPLQ. Over residues 276–285 the composition is skewed to pro residues; that stretch reads GPPPPKPSRP. Positions 377-390 are enriched in basic and acidic residues; it reads SAKHEDKKMKEKQP. A Phosphotyrosine modification is found at Y491. Residues 521-524 carry the SH2-binding; to LCP2 motif; it reads YEDV. Residue Y587 is modified to Phosphotyrosine. Positions 664-724 constitute an SH3 domain; that stretch reads IVINTAVACS…LIEHLDFKHQ (61 aa).

In terms of assembly, interacts with SKAP1, LCK and FYN. The phosphorylated form interacts with LCP2. Phosphorylation is required for its function in T-cell activation. Expressed in T-cells (at protein level). Widely expressed.

The protein resides in the membrane raft. Functionally, adapter protein that plays a role in T-cell receptor (TCR)-mediated activation of signaling pathways. Required for T-cell activation and integrin-mediated T-cell adhesion in response to TCR stimulation. This is FYN-binding protein 2 from Homo sapiens (Human).